A 185-amino-acid chain; its full sequence is Small ribosomal subunit protein uS4c (185 aa).

The S4 RNA-binding domain maps to 72 to 134 (MRLDNVIFRL…PTSCNALKGE (63 aa)). The tract at residues 132-154 (KGESPGGGETPDHLTASLSEGSR) is disordered.

This sequence belongs to the universal ribosomal protein uS4 family. Part of the 30S ribosomal subunit. Contacts protein S5. The interaction surface between S4 and S5 is involved in control of translational fidelity.

It localises to the plastid. The protein resides in the chloroplast. Its function is as follows. One of the primary rRNA binding proteins, it binds directly to 16S rRNA where it nucleates assembly of the body of the 30S subunit. In terms of biological role, with S5 and S12 plays an important role in translational accuracy. This chain is Small ribosomal subunit protein uS4c (rps4), found in Woodwardia unigemmata (Chainfern).